The sequence spans 1048 residues: Probable beta-glucosidase E (1048 aa).

The disordered stretch occupies residues 1 to 54; it reads MPPPPFRDAPSSAKSSQRYTPLHESIPEELNDKQYSSDADSLPLSDPSDGEDDS. Residues 1-150 lie on the Cytoplasmic side of the membrane; it reads MPPPPFRDAP…WRTVYYSKYW (150 aa). Over residues 36–47 the composition is skewed to low complexity; the sequence is SSDADSLPLSDP. The chain crosses the membrane as a helical; Signal-anchor for type II membrane protein span at residues 151–171; that stretch reads WRALIGVVVVLVLLVLVFLGL. Residues 172–1048 are Extracellular-facing; sequence ARSKQVGDEL…SRDLPLHGKY (877 aa). 3 N-linked (GlcNAc...) asparagine glycosylation sites follow: Asn-216, Asn-224, and Asn-410. Residue Asp-438 is part of the active site. Asn-481, Asn-520, Asn-578, Asn-895, and Asn-991 each carry an N-linked (GlcNAc...) asparagine glycan. The segment at 508 to 527 is disordered; that stretch reads WERPPPDGEGGPNFSSWTDD.

It belongs to the glycosyl hydrolase 3 family.

It localises to the cell membrane. The enzyme catalyses Hydrolysis of terminal, non-reducing beta-D-glucosyl residues with release of beta-D-glucose.. It participates in glycan metabolism; cellulose degradation. Beta-glucosidases are one of a number of cellulolytic enzymes involved in the degradation of cellulosic biomass. Catalyzes the last step releasing glucose from the inhibitory cellobiose. In Aspergillus oryzae (strain ATCC 42149 / RIB 40) (Yellow koji mold), this protein is Probable beta-glucosidase E (bglE).